The primary structure comprises 1002 residues: Collagen alpha-2(I) chain (1002 aa).

The tract at residues 1-1002 (SGGFDFSFLP…PGPPGPPGAS (1002 aa)) is disordered. Residues proline 10, proline 13, proline 28, and proline 34 each carry the 4-hydroxyproline modification. Residues 17–60 (GPMGLMGPRGPPGASGAPGPQGFQGPAGEPGEPGQTGPAGARGP) are compositionally biased toward low complexity. Lysine 89 is subject to 5-hydroxylysine; alternate. An O-linked (Gal...) hydroxylysine; alternate glycan is attached at lysine 89. Composition is skewed to low complexity over residues 145–166 (SRGS…SAGP) and 211–232 (PGAN…AGAP). Residues 266-275 (GESGGKGEPG) are compositionally biased toward gly residues. Over residues 276-286 (SAGPQGPPGSS) the composition is skewed to low complexity. Residues 308–317 (GLRGGPGSRG) show a composition bias toward gly residues. Positions 330 to 346 (PAGARGASGPAGVRGPS) are enriched in low complexity. A 4-hydroxyproline mark is found at proline 352 and proline 355. Positions 381-400 (LPGIDGRPGPIGPAGARGEA) are enriched in low complexity. Positions 449-458 (GVQGGKGEQG) are enriched in gly residues. Low complexity-rich tracts occupy residues 505–522 (PGES…SRGP) and 534–544 (EPGVVGAPGTA). Gly residues predominate over residues 545-554 (GPAGSGGLPG). Composition is skewed to low complexity over residues 577–621 (VGTT…PRGS) and 628–648 (VGPA…QPGA). Basic and acidic residues predominate over residues 649-658 (KGERGTKGPK). The span at 666 to 676 (PTGPVGSAGPA) shows a compositional bias: low complexity. The segment covering 686–695 (GSRGDGGPPG) has biased composition (gly residues). Low complexity predominate over residues 697–706 (TGFPGAAGRT). A compositionally biased stretch (gly residues) spans 743 to 752 (GETGAGGPPG). 2 stretches are compositionally biased toward low complexity: residues 760-787 (SGEP…LGLP) and 795-805 (LPGVAGAVGEP). Residues 806-828 (GPLGIGPPGARGPSGGVGPGVNG) are compositionally biased toward gly residues. A compositionally biased stretch (basic and acidic residues) spans 833-851 (AGRDGPPGRDGLPGHKGER). The segment covering 853-898 (YAGNAGPVGAAGAPGPHGAVGPAGKHGNRGEPGPVGSAGPVGALGP) has biased composition (low complexity). Residues 908–919 (RGDKGEAGDKGP) are compositionally biased toward basic and acidic residues. The span at 987–1002 (SGPPGPPGPPGPPGAS) shows a compositional bias: pro residues.

Belongs to the fibrillar collagen family. As to quaternary structure, trimers of one alpha 2(I) and two alpha 1(I) chains. Interacts (via C-terminus) with TMEM131 (via PapD-L domain); the interaction is direct and is involved in assembly and TRAPPIII ER-to-Golgi transport complex-dependent secretion of collagen. In terms of processing, prolines at the third position of the tripeptide repeating unit (G-X-Y) are hydroxylated in some or all of the chains. Expressed in bones.

The protein localises to the secreted. It is found in the extracellular space. The protein resides in the extracellular matrix. Type I collagen is a member of group I collagen (fibrillar forming collagen). In Glossotherium robustum (Ground sloth), this protein is Collagen alpha-2(I) chain.